Here is a 180-residue protein sequence, read N- to C-terminus: Endoribonuclease YbeY (180 aa).

The Zn(2+) site is built by His-136, His-140, and His-146.

This sequence belongs to the endoribonuclease YbeY family. Zn(2+) serves as cofactor.

The protein localises to the cytoplasm. Its function is as follows. Single strand-specific metallo-endoribonuclease involved in late-stage 70S ribosome quality control and in maturation of the 3' terminus of the 16S rRNA. This Synechococcus sp. (strain CC9902) protein is Endoribonuclease YbeY.